We begin with the raw amino-acid sequence, 585 residues long: Frizzled-5 (585 aa).

The N-terminal stretch at 1-26 is a signal peptide; that stretch reads MARPDPSAPPSLLLLLLAQLVGRAAA. Residues 27–238 are Extracellular-facing; the sequence is ASKAPVCQEI…PDERTFATFW (212 aa). The region spanning 28 to 150 is the FZ domain; the sequence is SKAPVCQEIT…GDAEVLCMDY (123 aa). 5 disulfide bridges follow: Cys-33/Cys-94, Cys-41/Cys-87, Cys-78/Cys-116, Cys-105/Cys-147, and Cys-109/Cys-133. The N-linked (GlcNAc...) asparagine glycan is linked to Asn-47. A glycan (N-linked (GlcNAc...) asparagine) is linked at Asn-151. Positions 156–182 are disordered; it reads TTASPKSFPAKPTLPGPPGAPSSGGEC. A helical transmembrane segment spans residues 239 to 259; that stretch reads IGLWSVLCFISTSTTVATFLI. Topologically, residues 260-270 are cytoplasmic; the sequence is DMERFRYPERP. Residues 271–291 form a helical membrane-spanning segment; the sequence is IIFLSACYLCVSLGFLVRLVV. The Extracellular segment spans residues 292 to 315; sequence GHASVACSREHSHIHYETTGPALC. The helical transmembrane segment at 316 to 336 threads the bilayer; that stretch reads TVVFLLVYFFGMASSIWWVIL. Residues 337 to 358 lie on the Cytoplasmic side of the membrane; sequence SLTWFLAAGMKWGNEAIAGYAQ. The chain crosses the membrane as a helical span at residues 359 to 379; it reads YFHLAAWLIPSVKSITALALS. At 380–402 the chain is on the extracellular side; sequence SVDGDPVAGICYVGNQNLNSLRG. The helical transmembrane segment at 403–423 threads the bilayer; it reads FVLGPLVLYLLVGTLFLLAGF. At 424–449 the chain is on the cytoplasmic side; it reads VSLFRIRSVIKQGGTKTDKLEKLMIR. Residues 450 to 470 form a helical membrane-spanning segment; sequence IGIFTLLYTVPASIVVACYLY. The Extracellular portion of the chain corresponds to 471–500; it reads EQHYRESWEAALTCACPGPDAGQPRAKPEY. Residues 501-521 traverse the membrane as a helical segment; sequence WVLMLKYFMCLVVGITSGVWI. Residues 522–585 are Cytoplasmic-facing; it reads WSGKTLESWR…YHKQVSLSHV (64 aa). Positions 582–584 match the PDZ-binding motif; the sequence is LSH.

It belongs to the G-protein coupled receptor Fz/Smo family. Binding of unsaturated fatty acid molecules (via FZ domain) promotes homodimerization (via FZ domain). Interacts with WNT2B. Interacts with WNT7A. Interacts with GOPC. Ubiquitinated by RNF43 and ZNRF3, leading to its degradation by the proteasome. In terms of tissue distribution, detected in hippocampus (at protein level). Expressed in eye, kidney, lung, chondrocytes, epithelial cells of the small intestine and gobelet cells of the colon.

The protein localises to the cell membrane. Its subcellular location is the golgi apparatus membrane. It localises to the synapse. It is found in the perikaryon. The protein resides in the cell projection. The protein localises to the dendrite. Its subcellular location is the axon. Its function is as follows. Receptor for Wnt proteins. Functions in the canonical Wnt/beta-catenin signaling pathway. In vitro activates WNT2, WNT10B, WNT5A, but not WNT2B or WNT4 signaling. In neurons, activation by WNT7A promotes formation of synapses. May be involved in transduction and intercellular transmission of polarity information during tissue morphogenesis and/or in differentiated tissues. Plays a role in yolk sac angiogenesis and in placental vascularization. Plays a role in ocular development. The protein is Frizzled-5 (Fzd5) of Mus musculus (Mouse).